Here is an 83-residue protein sequence, read N- to C-terminus: Small ribosomal subunit protein bS16 (83 aa).

It belongs to the bacterial ribosomal protein bS16 family.

The protein is Small ribosomal subunit protein bS16 of Pseudomonas aeruginosa (strain LESB58).